A 175-amino-acid chain; its full sequence is MAELHIIGQIIGATGFPQNSLFCKWGVHTGGAWRLLSGLREGQTQVDMPQTGDMAYWSHPIDLHYTTKGLQGWPKLHLQVWHQDSFGRCQLYGYGYIHVPSSPGQHRLQCVTWRPLGSWQDQLSEMFVGGGPQLRSPDLIYSGADRYRLHTVGMGTVELELCIILRHFDRYGVES.

Positions 2 to 118 (AELHIIGQII…QCVTWRPLGS (117 aa)) constitute a C2 B9-type domain.

The protein belongs to the B9D family. As to quaternary structure, part of the tectonic-like complex (also named B9 complex).

The protein localises to the cytoplasm. Its subcellular location is the cytoskeleton. It localises to the cilium basal body. It is found in the cilium axoneme. Component of the tectonic-like complex, a complex localized at the transition zone of primary cilia and acting as a barrier that prevents diffusion of transmembrane proteins between the cilia and plasma membranes. This Danio rerio (Zebrafish) protein is B9 domain-containing protein 2 (b9d2).